The primary structure comprises 516 residues: 2-isopropylmalate synthase (516 aa).

Positions 5-267 constitute a Pyruvate carboxyltransferase domain; sequence IIIFDTTLRD…STDINIKEIH (263 aa). Residues aspartate 14, histidine 202, histidine 204, and asparagine 238 each contribute to the Mn(2+) site. Positions 393–516 are regulatory domain; it reads KLEYFDVQSK…VNKELERLQK (124 aa).

The protein belongs to the alpha-IPM synthase/homocitrate synthase family. LeuA type 1 subfamily. Homodimer. Mn(2+) serves as cofactor.

It is found in the cytoplasm. The enzyme catalyses 3-methyl-2-oxobutanoate + acetyl-CoA + H2O = (2S)-2-isopropylmalate + CoA + H(+). It functions in the pathway amino-acid biosynthesis; L-leucine biosynthesis; L-leucine from 3-methyl-2-oxobutanoate: step 1/4. Functionally, catalyzes the condensation of the acetyl group of acetyl-CoA with 3-methyl-2-oxobutanoate (2-ketoisovalerate) to form 3-carboxy-3-hydroxy-4-methylpentanoate (2-isopropylmalate). The sequence is that of 2-isopropylmalate synthase from Buchnera aphidicola subsp. Cinara cedri (strain Cc).